Here is a 367-residue protein sequence, read N- to C-terminus: Cell division protein FtsZ (367 aa).

GTP is bound by residues 17-21 (GGGSN), 104-106 (GTG), glutamate 135, lysine 139, and aspartate 183.

It belongs to the FtsZ family. Homodimer. Polymerizes to form a dynamic ring structure in a strictly GTP-dependent manner. Interacts directly with several other division proteins.

Its subcellular location is the cytoplasm. Essential cell division protein that forms a contractile ring structure (Z ring) at the future cell division site. The regulation of the ring assembly controls the timing and the location of cell division. One of the functions of the FtsZ ring is to recruit other cell division proteins to the septum to produce a new cell wall between the dividing cells. Binds GTP and shows GTPase activity. The protein is Cell division protein FtsZ of Aquifex aeolicus (strain VF5).